The primary structure comprises 772 residues: Mitochondrial intermediate peptidase (772 aa).

The N-terminal 37 residues, 1 to 37 (MLRTIILKAGSNASIPSPSRQNKLLRFFATAGAVSRT), are a transit peptide targeting the mitochondrion. Residue histidine 558 participates in Zn(2+) binding. The active site involves glutamate 559. Zn(2+)-binding residues include histidine 562 and glutamate 587.

Belongs to the peptidase M3 family. Zn(2+) serves as cofactor.

The protein resides in the mitochondrion matrix. The enzyme catalyses Release of an N-terminal octapeptide as second stage of processing of some proteins imported into the mitochondrion.. With respect to regulation, stimulated by Fe(2+). Its function is as follows. Cleaves proteins, imported into the mitochondrion, to their mature size. While most mitochondrial precursor proteins are processed to the mature form in one step by mitochondrial processing peptidase (MPP), the sequential cleavage by MIP of an octapeptide after initial processing by MPP is a required step for a subgroup of nuclear-encoded precursor proteins destined for the matrix or the inner membrane. Cleaves precursor proteins of respiratory components, including subunits of the electron transport chain and tricarboxylic acid cycle enzymes, and components of the mitochondrial genetic machinery, including ribosomal proteins, translation factors, and proteins required for mitochondrial DNA metabolism. The protein is Mitochondrial intermediate peptidase (OCT1) of Saccharomyces cerevisiae (strain ATCC 204508 / S288c) (Baker's yeast).